The chain runs to 318 residues: Malonyl-S-ACP:biotin-protein carboxyltransferase MADC (318 aa).

In terms of domain architecture, CoA carboxyltransferase N-terminal spans A2–E257.

The protein resides in the cytoplasm. It catalyses the reaction N(6)-biotinyl-L-lysyl-[protein] + malonyl-[ACP] = N(6)-carboxybiotinyl-L-lysyl-[protein] + acetyl-[ACP]. Gamma subunit of the biotin-dependent malonate decarboxylase multienzyme complex (EC 7.2.4.4). The two subunits MADC and MADD are required for the transfer of the malonate carboxy group from the acyl-carrier protein (ACP) to the prosthetic group of the biotin carrier MADF. Required for the regeneration of ACP. This is Malonyl-S-ACP:biotin-protein carboxyltransferase MADC (madC) from Malonomonas rubra.